The chain runs to 398 residues: Glia-derived nexin (398 aa).

Residues 1–19 (MNWHLPLFLLASVTLPSIC) form the signal peptide. N-linked (GlcNAc...) asparagine glycans are attached at residues N118 and N159.

Belongs to the serpin family.

The protein localises to the secreted. Its subcellular location is the extracellular space. Functionally, serine protease inhibitor with activity toward thrombin, trypsin, and urokinase. Promotes neurite extension by inhibiting thrombin. Binds heparin. This is Glia-derived nexin (SERPINE2) from Homo sapiens (Human).